The following is a 1062-amino-acid chain: Carbamoyl phosphate synthase large chain (1062 aa).

Residues 1–401 are carboxyphosphate synthetic domain; the sequence is MPKRTDIHKI…AMQKAVRSLE (401 aa). ATP-binding residues include R129, R169, G175, G176, K208, I210, E215, G241, I242, H243, Q284, and E298. The ATP-grasp 1 domain maps to 133–327; that stretch reads KELCKELGEP…IAKMAAKIAI (195 aa). Residues Q284, E298, and N300 each coordinate Mg(2+). Mn(2+)-binding residues include Q284, E298, and N300. The segment at 402–546 is oligomerization domain; that stretch reads IDEKDLYSET…YSTYDGENES (145 aa). The tract at residues 547 to 929 is carbamoyl phosphate synthetic domain; it reads HKSGKKSVIV…ALYKAFAGAK (383 aa). Residues 671 to 861 enclose the ATP-grasp 2 domain; it reads DQIIKKLKLN…MAQVATRVIM (191 aa). Positions 707, 746, 748, 752, 777, 778, 779, 780, 820, and 832 each coordinate ATP. 3 residues coordinate Mg(2+): Q820, E832, and N834. The Mn(2+) site is built by Q820, E832, and N834. In terms of domain architecture, MGS-like spans 930–1062; the sequence is MQLPENGNVL…NRSFATDALK (133 aa). The tract at residues 930–1062 is allosteric domain; it reads MQLPENGNVL…NRSFATDALK (133 aa).

Belongs to the CarB family. Composed of two chains; the small (or glutamine) chain promotes the hydrolysis of glutamine to ammonia, which is used by the large (or ammonia) chain to synthesize carbamoyl phosphate. Tetramer of heterodimers (alpha,beta)4. Requires Mg(2+) as cofactor. It depends on Mn(2+) as a cofactor.

It carries out the reaction hydrogencarbonate + L-glutamine + 2 ATP + H2O = carbamoyl phosphate + L-glutamate + 2 ADP + phosphate + 2 H(+). The catalysed reaction is hydrogencarbonate + NH4(+) + 2 ATP = carbamoyl phosphate + 2 ADP + phosphate + 2 H(+). Its pathway is amino-acid biosynthesis; L-arginine biosynthesis; carbamoyl phosphate from bicarbonate: step 1/1. The protein operates within pyrimidine metabolism; UMP biosynthesis via de novo pathway; (S)-dihydroorotate from bicarbonate: step 1/3. In terms of biological role, large subunit of the glutamine-dependent carbamoyl phosphate synthetase (CPSase). CPSase catalyzes the formation of carbamoyl phosphate from the ammonia moiety of glutamine, carbonate, and phosphate donated by ATP, constituting the first step of 2 biosynthetic pathways, one leading to arginine and/or urea and the other to pyrimidine nucleotides. The large subunit (synthetase) binds the substrates ammonia (free or transferred from glutamine from the small subunit), hydrogencarbonate and ATP and carries out an ATP-coupled ligase reaction, activating hydrogencarbonate by forming carboxy phosphate which reacts with ammonia to form carbamoyl phosphate. In Lactobacillus johnsonii (strain CNCM I-12250 / La1 / NCC 533), this protein is Carbamoyl phosphate synthase large chain.